Consider the following 103-residue polypeptide: Large ribosomal subunit protein bL21 (103 aa).

It belongs to the bacterial ribosomal protein bL21 family. In terms of assembly, part of the 50S ribosomal subunit. Contacts protein L20.

This protein binds to 23S rRNA in the presence of protein L20. The polypeptide is Large ribosomal subunit protein bL21 (Clostridium botulinum (strain Alaska E43 / Type E3)).